Consider the following 484-residue polypeptide: MPGTSVSDLSTATAVDAPALLPLPVARPSAPAVVRGKLYIKTHGCQMNEYDSAKMADVLAASEGLELTDNPEEADVVLVNTCSIREKAQEKVFSQLGRWKALKAGGKPVIIGVGGCVASQEGEAIVKRAPYVDLVFGPQTLHRLPELIRARRESGKSQVDISFPEIEKFDRLPEPRAEGPSAFVSIMEGCSKYCSFCVVPYTRGEEVSRPFEDVLVEVAQLAAQGVREINLLGQNVNAYRGAYGADAGDPAQYADLGLLIRTIAQIEGIGRIRFTTSHPLEFSDSLVDAYRDVPQLANYLHLPVQAGSDRILSAMKRGYTALEFKSRIRKLRAVRPDISISSDFIVGFPGETEADFEKTMKLIEDVGFDQSFSFVYSRRPGTPASDLQDDTPETVKQARLARLQAHISAHAASISQSMVGSVQRVLVEGPSRRDPNELTGKSENMRPVNFPGNPRLIGQFVDVLITEAMSNSLRGRIQLDDSAH.

In terms of domain architecture, MTTase N-terminal spans 36-153 (GKLYIKTHGC…LPELIRARRE (118 aa)). [4Fe-4S] cluster is bound by residues Cys-45, Cys-82, Cys-116, Cys-190, Cys-194, and Cys-197. The Radical SAM core domain occupies 176-415 (RAEGPSAFVS…HISAHAASIS (240 aa)). A TRAM domain is found at 416–479 (QSMVGSVQRV…SNSLRGRIQL (64 aa)). A disordered region spans residues 428–450 (EGPSRRDPNELTGKSENMRPVNF).

It belongs to the methylthiotransferase family. MiaB subfamily. Monomer. Requires [4Fe-4S] cluster as cofactor.

It localises to the cytoplasm. The enzyme catalyses N(6)-dimethylallyladenosine(37) in tRNA + (sulfur carrier)-SH + AH2 + 2 S-adenosyl-L-methionine = 2-methylsulfanyl-N(6)-dimethylallyladenosine(37) in tRNA + (sulfur carrier)-H + 5'-deoxyadenosine + L-methionine + A + S-adenosyl-L-homocysteine + 2 H(+). In terms of biological role, catalyzes the methylthiolation of N6-(dimethylallyl)adenosine (i(6)A), leading to the formation of 2-methylthio-N6-(dimethylallyl)adenosine (ms(2)i(6)A) at position 37 in tRNAs that read codons beginning with uridine. This is tRNA-2-methylthio-N(6)-dimethylallyladenosine synthase from Xanthomonas oryzae pv. oryzae (strain KACC10331 / KXO85).